A 352-amino-acid polypeptide reads, in one-letter code: Homeobox protein Mohawk (352 aa).

A disordered region spans residues 19-54 (GASERERGGRPYSGVLDSPHARPEVGIPDGPPLKDN). A DNA-binding region (homeobox; TALE-type) is located at residues 71-132 (VRHKRQALQD…NARRRLKNTV (62 aa)). Disordered stretches follow at residues 159–189 (VSSDDSCSEDGENPPRTHMNEGGYNTPVHHP) and 245–301 (TRQR…PSKD).

The protein belongs to the TALE/IRO homeobox family.

The protein localises to the nucleus. May act as a morphogenetic regulator of cell adhesion. This chain is Homeobox protein Mohawk (MKX), found in Homo sapiens (Human).